The sequence spans 510 residues: G-protein coupled receptor dmsr-1 (510 aa).

The Extracellular segment spans residues Met1–Ala35. The chain crosses the membrane as a helical span at residues Tyr36–Leu56. Topologically, residues Thr57 to Pro64 are cytoplasmic. Residues Val65–Ile85 form a helical membrane-spanning segment. Residues Tyr86 to Trp107 lie on the Extracellular side of the membrane. The chain crosses the membrane as a helical span at residues Ala108–Leu128. Residues Ser129–His155 are Cytoplasmic-facing. A helical transmembrane segment spans residues Ser156–Leu176. Residues Asn177–Trp223 are Extracellular-facing. Asn186 carries an N-linked (GlcNAc...) asparagine glycan. The chain crosses the membrane as a helical span at residues Ile224–Leu244. The Cytoplasmic portion of the chain corresponds to Leu245–Met307. Residues Leu308–Leu328 traverse the membrane as a helical segment. Residues Ser329 to Asn343 lie on the Extracellular side of the membrane. The chain crosses the membrane as a helical span at residues Leu344–Cys364. At Ser365–Ile510 the chain is on the cytoplasmic side. The segment at Gly452 to Ile510 is disordered. The segment covering His487–Ser499 has biased composition (polar residues).

The protein belongs to the G-protein coupled receptor 1 family. In terms of tissue distribution, expressed in head neurons including the RID neuron and the paired AIY neurons, and in tail neurons including the paired PHA and PHB neurons. Not expressed in AVE and AVA neurons.

It localises to the cell membrane. In terms of biological role, G-protein coupled receptor. Functionally, G-protein coupled receptor for flp-13 RFamide neuropeptides in vitro. Upon activation by flp-13 RFamide neuropeptides, promotes sleep in response to cellular stress also known as stress-induced sleep (SIS), probably by inhibiting the activity of wake-promoting neurons. This is G-protein coupled receptor dmsr-1 from Caenorhabditis elegans.